A 130-amino-acid chain; its full sequence is uncharacterized protein (130 aa).

The interval 1–28 (MELAKERNGPHQKHHGQCQNHCTSPNTV) is disordered. Positions 17–28 (QCQNHCTSPNTV) are enriched in polar residues.

This is an uncharacterized protein from Saccharomyces cerevisiae (strain ATCC 204508 / S288c) (Baker's yeast).